Here is a 182-residue protein sequence, read N- to C-terminus: Putative manganese efflux pump MntP 1 (182 aa).

Transmembrane regions (helical) follow at residues 4-24, 42-62, 63-83, 103-123, 127-147, and 162-182; these read LLLL…GLGA, IFQG…IAFI, SAFD…KMIY, LILS…LHLI, VFLS…LGVL, and ILGG…HLFF.

It belongs to the MntP (TC 9.B.29) family.

It is found in the cell inner membrane. In terms of biological role, probably functions as a manganese efflux pump. This is Putative manganese efflux pump MntP 1 from Wolinella succinogenes (strain ATCC 29543 / DSM 1740 / CCUG 13145 / JCM 31913 / LMG 7466 / NCTC 11488 / FDC 602W) (Vibrio succinogenes).